A 133-amino-acid polypeptide reads, in one-letter code: uncharacterized protein (133 aa).

A helical membrane pass occupies residues 11–31; that stretch reads YFLISVFLIFIVSGITYFYST.

The protein resides in the membrane. This is an uncharacterized protein from Borreliella burgdorferi (strain ATCC 35210 / DSM 4680 / CIP 102532 / B31) (Borrelia burgdorferi).